Consider the following 75-residue polypeptide: Small ribosomal subunit protein bS21B (75 aa).

Residues 33–52 (RRSYEKPSERRAREKAEAVR) are compositionally biased toward basic and acidic residues. Residues 33–75 (RRSYEKPSERRAREKAEAVRRARKLARKQAQREGLLPGKKRAA) are disordered.

The protein belongs to the bacterial ribosomal protein bS21 family.

This is Small ribosomal subunit protein bS21B from Chelativorans sp. (strain BNC1).